We begin with the raw amino-acid sequence, 234 residues long: Thymidine kinase, cytosolic (234 aa).

Ser13 carries the phosphoserine modification. ATP-binding positions include 26 to 33 (GPMFSGKS), 58 to 60 (DTR), and 97 to 100 (DEGQ). Residue Glu98 is the Proton acceptor of the active site. Phe128 is a substrate binding site. Zn(2+) contacts are provided by Cys153 and Cys156. Residues 172 to 176 (VEVIG) and Tyr181 each bind substrate. Zn(2+)-binding residues include Cys185 and Cys188. Residues 203-205 (KEN) carry the KEN box motif.

It belongs to the thymidine kinase family. Homotetramer. Tetramerization from dimerization is induced by ATP and increases catalytic efficiency due to a high affinity for thymidine. Tetramerization is inhibited by phosphorylation at Ser-13. Interacts (via the KEN box) with FZR1. Post-translationally, phosphorylated on Ser-13 in mitosis. Phosphorylation of Ser-13 by CDK1 during mitosis reduces homotetramerization and catalytic efficiency when DNA replication is complete and intracellular TK1 is still present at a high level. Polyubiquitinated. Postmitosis, ubiquitination leads to proteasomal degradation. The KEN box sequence located at the C-terminal region targets for degradation by the anaphase promoting complex (APC/C) activated and rate-limited by FZR1.

The protein localises to the cytoplasm. The catalysed reaction is thymidine + ATP = dTMP + ADP + H(+). In terms of biological role, cell-cycle-regulated enzyme of importance in nucleotide metabolism. Catalyzes the first enzymatic step in the salvage pathway converting thymidine into thymidine monophosphate. Transcriptional regulation limits expression to the S phase of the cell cycle and transient expression coincides with the oscillation in the intracellular dTTP concentration. The polypeptide is Thymidine kinase, cytosolic (TK1) (Cricetulus griseus (Chinese hamster)).